Here is a 367-residue protein sequence, read N- to C-terminus: Alanine racemase (367 aa).

Lys-34 functions as the Proton acceptor; specific for D-alanine in the catalytic mechanism. N6-(pyridoxal phosphate)lysine is present on Lys-34. Substrate is bound at residue Arg-131. The active-site Proton acceptor; specific for L-alanine is the Tyr-258. Residue Met-306 coordinates substrate.

This sequence belongs to the alanine racemase family. Requires pyridoxal 5'-phosphate as cofactor.

The enzyme catalyses L-alanine = D-alanine. It participates in amino-acid biosynthesis; D-alanine biosynthesis; D-alanine from L-alanine: step 1/1. In terms of biological role, catalyzes the interconversion of L-alanine and D-alanine. May also act on other amino acids. The chain is Alanine racemase (alr) from Corynebacterium efficiens (strain DSM 44549 / YS-314 / AJ 12310 / JCM 11189 / NBRC 100395).